Here is a 394-residue protein sequence, read N- to C-terminus: Elongation factor Tu 1 (394 aa).

Positions 10–204 constitute a tr-type G domain; the sequence is KPHVNVGTIG…ALDSYIPEPQ (195 aa). The tract at residues 19–26 is G1; the sequence is GHVDHGKT. 19 to 26 is a binding site for GTP; it reads GHVDHGKT. Residue Thr26 coordinates Mg(2+). The G2 stretch occupies residues 60–64; the sequence is GITIN. The G3 stretch occupies residues 81-84; sequence DCPG. Residues 81 to 85 and 136 to 139 each bind GTP; these read DCPGH and NKCD. A G4 region spans residues 136–139; that stretch reads NKCD. The interval 174–176 is G5; that stretch reads SAL.

The protein belongs to the TRAFAC class translation factor GTPase superfamily. Classic translation factor GTPase family. EF-Tu/EF-1A subfamily. In terms of assembly, monomer.

It localises to the cytoplasm. It catalyses the reaction GTP + H2O = GDP + phosphate + H(+). In terms of biological role, GTP hydrolase that promotes the GTP-dependent binding of aminoacyl-tRNA to the A-site of ribosomes during protein biosynthesis. This Shewanella baltica (strain OS195) protein is Elongation factor Tu 1.